A 231-amino-acid polypeptide reads, in one-letter code: PIAGSMVLAAILLKLGGYGIIRMMQILPTTKTDMFLPFIVLALWGAILANLTCLQQTDLKSLIAYSSISHMGLVVAAIIIQTPWGLSGAMALMIAHGFTSSALFCLANTTYERTHTRILILTRGLHNILPMATTWWLLTNLMNIAIPPTMNFTGELLIMSALFNWCPTTIIMLGLSMLITASYSLHMFLSTQMGPTPLNNQTEPTHSREHLLMILHLIPLMMISMKPELII.

Transmembrane regions (helical) follow at residues 1-21 (PIAGSMVLAAILLKLGGYGII), 34-54 (MFLPFIVLALWGAILANLTCL), 63-85 (IAYSSISHMGLVVAAIIIQTPWG), 89-111 (AMALMIAHGFTSSALFCLANTTY), 128-148 (ILPMATTWWLLTNLMNIAIPP), 156-176 (LLIMSALFNWCPTTIIMLGLS), and 211-231 (LLMILHLIPLMMISMKPELII).

Belongs to the complex I subunit 4 family.

The protein resides in the mitochondrion membrane. It carries out the reaction a ubiquinone + NADH + 5 H(+)(in) = a ubiquinol + NAD(+) + 4 H(+)(out). Functionally, core subunit of the mitochondrial membrane respiratory chain NADH dehydrogenase (Complex I) that is believed to belong to the minimal assembly required for catalysis. Complex I functions in the transfer of electrons from NADH to the respiratory chain. The immediate electron acceptor for the enzyme is believed to be ubiquinone. This Agkistrodon piscivorus piscivorus (Eastern cottonmouth) protein is NADH-ubiquinone oxidoreductase chain 4 (MT-ND4).